The sequence spans 644 residues: Exoribonuclease 2 (644 aa).

The RNB domain maps to 189–516; that stretch reads REDLTALNFV…NHRLLKAIIT (328 aa). One can recognise an S1 motif domain in the interval 561–643; it reads DTRFTAEIID…ETRNVIARPV (83 aa).

This sequence belongs to the RNR ribonuclease family. RNase II subfamily.

It localises to the cytoplasm. It carries out the reaction Exonucleolytic cleavage in the 3'- to 5'-direction to yield nucleoside 5'-phosphates.. Involved in mRNA degradation. Hydrolyzes single-stranded polyribonucleotides processively in the 3' to 5' direction. The chain is Exoribonuclease 2 from Yersinia pseudotuberculosis serotype O:3 (strain YPIII).